Here is a 156-residue protein sequence, read N- to C-terminus: MRIIEGKLQLQGNEKVAILTSRFNHIITDRLKEGAMDCFKRHGGDEDLLDIVLVPGAYELPFILERLLGSGKYDGVCVLGAIIRGGTPHFDYVSAEATKGIAHAMLKYSMPVSFGVLTTDNIEQAIERAGSKAGNKGFEAMSTLIELLSLCQTLKG.

5-amino-6-(D-ribitylamino)uracil-binding positions include Phe23, 57–59 (AYE), and 81–83 (AII). Residue 86–87 (GT) coordinates (2S)-2-hydroxy-3-oxobutyl phosphate. His89 functions as the Proton donor in the catalytic mechanism. 5-amino-6-(D-ribitylamino)uracil is bound at residue Phe114. Arg128 contacts (2S)-2-hydroxy-3-oxobutyl phosphate.

Belongs to the DMRL synthase family.

The enzyme catalyses (2S)-2-hydroxy-3-oxobutyl phosphate + 5-amino-6-(D-ribitylamino)uracil = 6,7-dimethyl-8-(1-D-ribityl)lumazine + phosphate + 2 H2O + H(+). It participates in cofactor biosynthesis; riboflavin biosynthesis; riboflavin from 2-hydroxy-3-oxobutyl phosphate and 5-amino-6-(D-ribitylamino)uracil: step 1/2. Functionally, catalyzes the formation of 6,7-dimethyl-8-ribityllumazine by condensation of 5-amino-6-(D-ribitylamino)uracil with 3,4-dihydroxy-2-butanone 4-phosphate. This is the penultimate step in the biosynthesis of riboflavin. In Helicobacter pylori (strain P12), this protein is 6,7-dimethyl-8-ribityllumazine synthase.